The primary structure comprises 282 residues: Bifunctional protein FolD (282 aa).

Residues 167 to 169 (GRS) and Ser192 contribute to the NADP(+) site.

The protein belongs to the tetrahydrofolate dehydrogenase/cyclohydrolase family. As to quaternary structure, homodimer.

The catalysed reaction is (6R)-5,10-methylene-5,6,7,8-tetrahydrofolate + NADP(+) = (6R)-5,10-methenyltetrahydrofolate + NADPH. The enzyme catalyses (6R)-5,10-methenyltetrahydrofolate + H2O = (6R)-10-formyltetrahydrofolate + H(+). The protein operates within one-carbon metabolism; tetrahydrofolate interconversion. Its function is as follows. Catalyzes the oxidation of 5,10-methylenetetrahydrofolate to 5,10-methenyltetrahydrofolate and then the hydrolysis of 5,10-methenyltetrahydrofolate to 10-formyltetrahydrofolate. The chain is Bifunctional protein FolD from Acidobacterium capsulatum (strain ATCC 51196 / DSM 11244 / BCRC 80197 / JCM 7670 / NBRC 15755 / NCIMB 13165 / 161).